Consider the following 466-residue polypeptide: Cell division protein FtsP (466 aa).

Residues 1 to 28 (MGNYSRRRFLQGSLAIVAGNVLPCAAMA) constitute a signal peptide (tat-type signal).

Belongs to the FtsP family. In terms of processing, predicted to be exported by the Tat system. The position of the signal peptide cleavage has not been experimentally proven.

It is found in the periplasm. Cell division protein that is required for growth during stress conditions. May be involved in protecting or stabilizing the divisomal assembly under conditions of stress. The chain is Cell division protein FtsP from Gallibacterium anatis (strain UMN179) (Pasteurella anatis).